A 290-amino-acid polypeptide reads, in one-letter code: Fat storage-inducing transmembrane protein 1 (290 aa).

The Lumenal portion of the chain corresponds to M1–R18. Residues T19–G39 traverse the membrane as a helical segment. Topologically, residues S40 to R54 are cytoplasmic. The chain crosses the membrane as a helical span at residues L55–N75. Over P76–S94 the chain is Lumenal. Residues A95 to T115 traverse the membrane as a helical segment. The Cytoplasmic segment spans residues R116–A141. The helical transmembrane segment at F142–L162 threads the bilayer. At H163–T187 the chain is on the lumenal side. Residue H186 is part of the active site. Residues F188–L208 traverse the membrane as a helical segment. Over A209–L220 the chain is Cytoplasmic. The helical transmembrane segment at V221–I241 threads the bilayer. The Lumenal portion of the chain corresponds to Y242–K249. Residue H244 is part of the active site. A helical membrane pass occupies residues V250–Q270. Over P271–N290 the chain is Cytoplasmic.

This sequence belongs to the FIT family. FIT1 subfamily.

Its subcellular location is the endoplasmic reticulum membrane. Its function is as follows. Plays an important role in the formation of lipid droplets (LDs) which are storage organelles at the center of lipid and energy homeostasis. Directly binds to diacylglycerol (DAGs) and triacylglycerol. The chain is Fat storage-inducing transmembrane protein 1 from Sus scrofa (Pig).